We begin with the raw amino-acid sequence, 337 residues long: Glyceraldehyde-3-phosphate dehydrogenase (337 aa).

NAD(+) contacts are provided by residues 12–13, Asp-34, and Arg-79; that span reads RI. Residues 150–152, Thr-181, 210–211, and Arg-233 each bind D-glyceraldehyde 3-phosphate; these read SCT and TG. Cys-151 serves as the catalytic Nucleophile. Asn-315 is an NAD(+) binding site.

It belongs to the glyceraldehyde-3-phosphate dehydrogenase family. In terms of assembly, homotetramer.

It is found in the cytoplasm. The catalysed reaction is D-glyceraldehyde 3-phosphate + phosphate + NAD(+) = (2R)-3-phospho-glyceroyl phosphate + NADH + H(+). It functions in the pathway carbohydrate degradation; glycolysis; pyruvate from D-glyceraldehyde 3-phosphate: step 1/5. This chain is Glyceraldehyde-3-phosphate dehydrogenase (GPD), found in Omphalotus olearius (Jack o'lantern).